The sequence spans 423 residues: D-threonate kinase (423 aa).

Substrate-binding positions include D9, R51, and 81-84 (KIDS). Residues S245, 355–358 (GGDI), and G401 each bind ATP.

This sequence belongs to the four-carbon acid sugar kinase family.

It catalyses the reaction D-threonate + ATP = 4-O-phospho-D-threonate + ADP + H(+). Its function is as follows. Catalyzes the ATP-dependent phosphorylation of D-threonate to D-threonate 4-phosphate. Can also phosphorylate 4-hydroxy-L-threonine, with lower efficiency. This side reaction may serve to deal with the toxicity of 4-hydroxy-L-threonine by converting it into 4-hydroxy-L-threonine 4-phosphate, a useful product that can be used by PdxA2. The protein is D-threonate kinase of Salmonella typhimurium (strain LT2 / SGSC1412 / ATCC 700720).